The chain runs to 92 residues: Cell division protein FtsB (92 aa).

Over 1 to 3 (MRL) the chain is Cytoplasmic. The chain crosses the membrane as a helical span at residues 4–21 (FIFLLVAVLLLFQYDFWF). Residues 22 to 92 (GKNGYLDYKR…IFYHIVKEQK (71 aa)) lie on the Periplasmic side of the membrane. Positions 26 to 74 (YLDYKRTAQQIAQHKQENEKLSQRNQVVAAEIKDLKQGVEAIEERARFQ) form a coiled coil.

Belongs to the FtsB family. In terms of assembly, part of a complex composed of FtsB, FtsL and FtsQ.

It is found in the cell inner membrane. Functionally, essential cell division protein. May link together the upstream cell division proteins, which are predominantly cytoplasmic, with the downstream cell division proteins, which are predominantly periplasmic. The sequence is that of Cell division protein FtsB from Pasteurella multocida (strain Pm70).